The sequence spans 437 residues: MTHLKGFDLLALGFMTFALFLGAGNIIFPPSAGMAAGEHVWSAAFGFLLTGVGLPLLTVVALARVGGGIGRLTQPIGRRAGVAFAIAVYLAIGPLFATPRTAVVSFEMGVAPFTGDGGVPLLIYTVAYFSVVLFLVLNPGRLVDRVGKVITPVLLSALLVLGGAAIFAPAGEIGSSSGEYQSAPLVQGFLQGYLTMDTLGALVFGIVIATAIRDRGISDSRLVTRYSMIAGVIAATGLSLVYLALFYLGATSQGIAGDAQNGVQILTAYVQQTFGVSGSLLLAVVITLACLTTAVGLITACGEFFSDLLPVSYKTVVIVFSLFSLLVANQGLTQLISLSVPVLVGLYPLAIVLIALSLFDRLWVSAPRVFVPVMIVALLFGIVDGLGAAKLNGWVPDVFAKLPLADQSLGWLLPVSIALVLAVVCDRLLGKPREAVA.

A run of 12 helical transmembrane segments spans residues 9 to 29 (LLALGFMTFALFLGAGNIIFP), 43 to 63 (AAFGFLLTGVGLPLLTVVALA), 80 to 100 (AGVAFAIAVYLAIGPLFATPR), 117 to 137 (GGVPLLIYTVAYFSVVLFLVL), 149 to 169 (VITPVLLSALLVLGGAAIFAP), 192 to 212 (GYLTMDTLGALVFGIVIATAI), 228 to 248 (MIAGVIAATGLSLVYLALFYL), 280 to 300 (LLLAVVITLACLTTAVGLITA), 308 to 328 (LLPVSYKTVVIVFSLFSLLVA), 335 to 355 (LISLSVPVLVGLYPLAIVLIA), 369 to 389 (VFVPVMIVALLFGIVDGLGAA), and 404 to 424 (LADQSLGWLLPVSIALVLAVV).

This sequence belongs to the branched chain amino acid transporter family.

It is found in the cell inner membrane. Functionally, component of the LIV-II transport system for branched-chain amino acids. BraB is specific for isoleucine, leucine and valine. The LIV-II transport system is coupled to sodium and lithium ions. This is Branched-chain amino acid transport system 2 carrier protein (braB) from Pseudomonas aeruginosa (strain ATCC 15692 / DSM 22644 / CIP 104116 / JCM 14847 / LMG 12228 / 1C / PRS 101 / PAO1).